A 450-amino-acid chain; its full sequence is tRNA-2-methylthio-N(6)-dimethylallyladenosine synthase (450 aa).

Positions 2–119 (KKVFVKTYGC…LPDLIARRQR (118 aa)) constitute an MTTase N-terminal domain. The [4Fe-4S] cluster site is built by cysteine 11, cysteine 48, cysteine 82, cysteine 156, cysteine 160, and cysteine 163. In terms of domain architecture, Radical SAM core spans 142 to 375 (RVEGPSAFVS…QATIEENVQR (234 aa)). The 71-residue stretch at 378–448 (QGMVGTVQRI…PHSLRGEIVV (71 aa)) folds into the TRAM domain.

It belongs to the methylthiotransferase family. MiaB subfamily. As to quaternary structure, monomer. Requires [4Fe-4S] cluster as cofactor.

It is found in the cytoplasm. It carries out the reaction N(6)-dimethylallyladenosine(37) in tRNA + (sulfur carrier)-SH + AH2 + 2 S-adenosyl-L-methionine = 2-methylsulfanyl-N(6)-dimethylallyladenosine(37) in tRNA + (sulfur carrier)-H + 5'-deoxyadenosine + L-methionine + A + S-adenosyl-L-homocysteine + 2 H(+). Functionally, catalyzes the methylthiolation of N6-(dimethylallyl)adenosine (i(6)A), leading to the formation of 2-methylthio-N6-(dimethylallyl)adenosine (ms(2)i(6)A) at position 37 in tRNAs that read codons beginning with uridine. In Cupriavidus taiwanensis (strain DSM 17343 / BCRC 17206 / CCUG 44338 / CIP 107171 / LMG 19424 / R1) (Ralstonia taiwanensis (strain LMG 19424)), this protein is tRNA-2-methylthio-N(6)-dimethylallyladenosine synthase.